Consider the following 241-residue polypeptide: 1-(5-phosphoribosyl)-5-[(5-phosphoribosylamino)methylideneamino] imidazole-4-carboxamide isomerase (241 aa).

The active-site Proton acceptor is the aspartate 10. Aspartate 131 acts as the Proton donor in catalysis.

The protein belongs to the HisA/HisF family.

Its subcellular location is the cytoplasm. The enzyme catalyses 1-(5-phospho-beta-D-ribosyl)-5-[(5-phospho-beta-D-ribosylamino)methylideneamino]imidazole-4-carboxamide = 5-[(5-phospho-1-deoxy-D-ribulos-1-ylimino)methylamino]-1-(5-phospho-beta-D-ribosyl)imidazole-4-carboxamide. It participates in amino-acid biosynthesis; L-histidine biosynthesis; L-histidine from 5-phospho-alpha-D-ribose 1-diphosphate: step 4/9. In Hyphomonas neptunium (strain ATCC 15444), this protein is 1-(5-phosphoribosyl)-5-[(5-phosphoribosylamino)methylideneamino] imidazole-4-carboxamide isomerase.